The following is a 127-amino-acid chain: Fumarate reductase subunit C (127 aa).

The next 3 membrane-spanning stretches (helical) occupy residues 30-50 (ATVL…GSLV), 67-87 (IVVA…QTFF), and 107-127 (IIVL…LIVM).

It belongs to the FrdC family. As to quaternary structure, part of an enzyme complex containing four subunits: a flavoprotein (FrdA), an iron-sulfur protein (FrdB), and two hydrophobic anchor proteins (FrdC and FrdD).

The protein resides in the cell inner membrane. Functionally, anchors the catalytic components of the fumarate reductase complex to the cell membrane, binds quinones. This Vibrio campbellii (strain ATCC BAA-1116) protein is Fumarate reductase subunit C.